The sequence spans 416 residues: LL-diaminopimelate aminotransferase (416 aa).

Substrate is bound by residues Y25 and G52. Pyridoxal 5'-phosphate is bound by residues Y78, S115–K116, Y140, N190, Y221, and S248–S250. Substrate is bound by residues K116, Y140, and N190. The residue at position 251 (K251) is an N6-(pyridoxal phosphate)lysine. Pyridoxal 5'-phosphate is bound at residue R259.

Belongs to the class-I pyridoxal-phosphate-dependent aminotransferase family. As to quaternary structure, homodimer. Requires pyridoxal 5'-phosphate as cofactor.

It localises to the cytoplasm. It catalyses the reaction (2S,6S)-2,6-diaminopimelate + 2-oxoglutarate = (S)-2,3,4,5-tetrahydrodipicolinate + L-glutamate + H2O + H(+). It functions in the pathway amino-acid biosynthesis; L-lysine biosynthesis via DAP pathway; LL-2,6-diaminopimelate from (S)-tetrahydrodipicolinate (aminotransferase route): step 1/1. Its function is as follows. Involved in the synthesis of meso-diaminopimelate (m-DAP or DL-DAP), required for both lysine and peptidoglycan biosynthesis. Catalyzes the direct conversion of tetrahydrodipicolinate to LL-diaminopimelate. This chain is LL-diaminopimelate aminotransferase (dapL), found in Methanococcus maripaludis (strain DSM 14266 / JCM 13030 / NBRC 101832 / S2 / LL).